The sequence spans 114 residues: Ribosome-binding factor A (114 aa).

This sequence belongs to the RbfA family. Monomer. Binds 30S ribosomal subunits, but not 50S ribosomal subunits or 70S ribosomes.

Its subcellular location is the cytoplasm. One of several proteins that assist in the late maturation steps of the functional core of the 30S ribosomal subunit. Associates with free 30S ribosomal subunits (but not with 30S subunits that are part of 70S ribosomes or polysomes). Required for efficient processing of 16S rRNA. May interact with the 5'-terminal helix region of 16S rRNA. This is Ribosome-binding factor A from Staphylococcus saprophyticus subsp. saprophyticus (strain ATCC 15305 / DSM 20229 / NCIMB 8711 / NCTC 7292 / S-41).